Reading from the N-terminus, the 32-residue chain is Chlorophyll a-b binding protein 2, chloroplastic (32 aa).

Chlorophyll a is bound by residues glutamate 19 and histidine 22. Arginine 24 is a chlorophyll b binding site.

This sequence belongs to the light-harvesting chlorophyll a/b-binding (LHC) protein family. The LHC complex consists of chlorophyll a-b binding proteins. Binds at least 14 chlorophylls (8 Chl-a and 6 Chl-b) and carotenoids such as lutein and neoxanthin. is required as a cofactor. Photoregulated by reversible phosphorylation of its threonine residues.

The protein resides in the plastid. The protein localises to the chloroplast thylakoid membrane. Its function is as follows. The light-harvesting complex (LHC) functions as a light receptor, it captures and delivers excitation energy to photosystems with which it is closely associated. This is Chlorophyll a-b binding protein 2, chloroplastic from Populus euphratica (Euphrates poplar).